Reading from the N-terminus, the 126-residue chain is Acidic phospholipase A2 2 (126 aa).

A propeptide spanning residues 1–7 (SNRPMPL) is cleaved from the precursor. Cystine bridges form between C18-C78, C33-C125, C35-C51, C50-C106, C57-C99, C67-C92, and C85-C97. Residues Y34, G36, and G38 each coordinate Ca(2+). H54 is an active-site residue. D55 serves as a coordination point for Ca(2+). The active site involves D100.

Belongs to the phospholipase A2 family. Group I subfamily. D49 sub-subfamily. As to quaternary structure, heterodimer formed between two homologous isoforms: isoform 1 and isoform 2. The cofactor is Ca(2+). Expressed by the venom gland.

It is found in the secreted. The catalysed reaction is a 1,2-diacyl-sn-glycero-3-phosphocholine + H2O = a 1-acyl-sn-glycero-3-phosphocholine + a fatty acid + H(+). Its function is as follows. PLA2 catalyzes the calcium-dependent hydrolysis of the 2-acyl groups in 3-sn-phosphoglycerides. The chain is Acidic phospholipase A2 2 from Naja sagittifera (Andaman cobra).